The chain runs to 593 residues: ETS-related transcription factor Elf-2 (593 aa).

The disordered stretch occupies residues 1-34 (MASAVVDSGGSALELPSDGGENQEGGDTGPDCPA). Phosphoserine is present on S107. The disordered stretch occupies residues 146–199 (VEVSTEESEPMDASPIPTSPDSHEPMKKKKVGRKPKTQQSPVSNGSPELGIKKK). Residues 171–181 (MKKKKVGRKPK) show a composition bias toward basic residues. Residue T182 is modified to Phosphothreonine. The span at 182 to 191 (TQQSPVSNGS) shows a compositional bias: polar residues. A phosphoserine mark is found at S185 and S191. The ETS DNA-binding region spans 208-290 (TYLWEFLLDL…EGQRLVYQFK (83 aa)). The disordered stretch occupies residues 362-383 (TSPTHDGSSRSPTTTAPVSAAA). Phosphoserine is present on residues S363 and S372. Over residues 370–383 (SRSPTTTAPVSAAA) the composition is skewed to low complexity. Residue T376 is modified to Phosphothreonine. Phosphoserine is present on S432. R496 bears the Omega-N-methylarginine mark. T523 is subject to Phosphothreonine. Residue K538 forms a Glycyl lysine isopeptide (Lys-Gly) (interchain with G-Cter in SUMO2) linkage.

Belongs to the ETS family. As to quaternary structure, interacts with LIM domains of LMO2. Interacts via its N-terminal region with RUNX1. In terms of tissue distribution, expressed in all tissues examined. Highest levels in thymocytes and bone marrow.

It is found in the nucleus. Functionally, probably transcriptionally activates the LYN and BLK promoters and acts synergistically with RUNX1 to transactivate the BLK promoter. In Mus musculus (Mouse), this protein is ETS-related transcription factor Elf-2.